Here is a 228-residue protein sequence, read N- to C-terminus: Phosphoribosylformylglycinamidine synthase subunit PurQ (228 aa).

In terms of domain architecture, Glutamine amidotransferase type-1 spans 3-226; the sequence is FAVVVFPGSN…VTYWRDAHVV (224 aa). The active-site Nucleophile is Cys-86. Residues His-195 and Glu-197 contribute to the active site.

Part of the FGAM synthase complex composed of 1 PurL, 1 PurQ and 2 PurS subunits.

It localises to the cytoplasm. It catalyses the reaction N(2)-formyl-N(1)-(5-phospho-beta-D-ribosyl)glycinamide + L-glutamine + ATP + H2O = 2-formamido-N(1)-(5-O-phospho-beta-D-ribosyl)acetamidine + L-glutamate + ADP + phosphate + H(+). The catalysed reaction is L-glutamine + H2O = L-glutamate + NH4(+). It participates in purine metabolism; IMP biosynthesis via de novo pathway; 5-amino-1-(5-phospho-D-ribosyl)imidazole from N(2)-formyl-N(1)-(5-phospho-D-ribosyl)glycinamide: step 1/2. Functionally, part of the phosphoribosylformylglycinamidine synthase complex involved in the purines biosynthetic pathway. Catalyzes the ATP-dependent conversion of formylglycinamide ribonucleotide (FGAR) and glutamine to yield formylglycinamidine ribonucleotide (FGAM) and glutamate. The FGAM synthase complex is composed of three subunits. PurQ produces an ammonia molecule by converting glutamine to glutamate. PurL transfers the ammonia molecule to FGAR to form FGAM in an ATP-dependent manner. PurS interacts with PurQ and PurL and is thought to assist in the transfer of the ammonia molecule from PurQ to PurL. This is Phosphoribosylformylglycinamidine synthase subunit PurQ from Anoxybacillus flavithermus (strain DSM 21510 / WK1).